The chain runs to 407 residues: 3-oxoacyl-[acyl-carrier-protein] synthase 1 (407 aa).

One can recognise a Ketosynthase family 3 (KS3) domain in the interval Met1–Lys405. Catalysis depends on for beta-ketoacyl synthase activity residues Cys164, His299, and His335.

This sequence belongs to the thiolase-like superfamily. Beta-ketoacyl-ACP synthases family. In terms of assembly, homodimer.

The protein resides in the cytoplasm. The enzyme catalyses a fatty acyl-[ACP] + malonyl-[ACP] + H(+) = a 3-oxoacyl-[ACP] + holo-[ACP] + CO2. It catalyses the reaction (3Z)-decenoyl-[ACP] + malonyl-[ACP] + H(+) = 3-oxo-(5Z)-dodecenoyl-[ACP] + holo-[ACP] + CO2. It participates in lipid metabolism; fatty acid biosynthesis. Its function is as follows. Involved in the type II fatty acid elongation cycle. Catalyzes the elongation of a wide range of acyl-ACP by the addition of two carbons from malonyl-ACP to an acyl acceptor. Can also use unsaturated fatty acids. Catalyzes a key reaction in unsaturated fatty acid (UFA) synthesis, the elongation of the cis-3-decenoyl-ACP produced by FabA. The protein is 3-oxoacyl-[acyl-carrier-protein] synthase 1 (fabB) of Buchnera aphidicola subsp. Baizongia pistaciae (strain Bp).